The primary structure comprises 361 residues: Chorismate synthase (361 aa).

R48 and R54 together coordinate NADP(+). FMN contacts are provided by residues 125-127 (RSS), 238-239 (NA), G278, 293-297 (KPTSS), and R319.

It belongs to the chorismate synthase family. As to quaternary structure, homotetramer. The cofactor is FMNH2.

It carries out the reaction 5-O-(1-carboxyvinyl)-3-phosphoshikimate = chorismate + phosphate. It participates in metabolic intermediate biosynthesis; chorismate biosynthesis; chorismate from D-erythrose 4-phosphate and phosphoenolpyruvate: step 7/7. Functionally, catalyzes the anti-1,4-elimination of the C-3 phosphate and the C-6 proR hydrogen from 5-enolpyruvylshikimate-3-phosphate (EPSP) to yield chorismate, which is the branch point compound that serves as the starting substrate for the three terminal pathways of aromatic amino acid biosynthesis. This reaction introduces a second double bond into the aromatic ring system. In Vibrio vulnificus (strain YJ016), this protein is Chorismate synthase.